An 813-amino-acid polypeptide reads, in one-letter code: MSGSQNNDKRQFLLERLLDAVKQCQIRFGGRKEIASDSDSRVTCLCAQFEAVLQHGLKRSRGLALTAAAIKQAAGFASKTETEPVFWYYVKEVLNKHELQRFYSLRHIASDVGRGRAWLRCALNEHSLERYLHMLLADRCRLSTFYEDWSFVMDEERSSMLPTMAAGLNSILFAINIDNKDLNGQSKFAPTVSDLLKESTQNVTSLLKESTQGVSSLFREITASSAVSILIKPEQETDPLPVVSRNVSADAKCKKERKKKKKVTNIISFDDEEDEQNSGDVFKKTPGAGESSEDNSDRSSVNIMSAFESPFGPNSNGSQSSNSWKIDSLSLNGEFGYQKLDVKSIDDEDVDENEDDVYGNSSGRKHRGHSESPEKPLEGNTCLSQMHSWAPLKVLHNDSDILFPVSGVGSYSPADAPLGSLENGTGPEDHVLPDPGLRYSVEASSPGHGSPLSSLLPSASVPESMTISELRQATVAMMNRKDELEEENRSLRNLLDGEMEHSAALRQEVDTLKRKVAEQEERQGMKVQALARENEVLKVQLKKYVGAVQMLKREGQTAEVPNLWSVDGEVTVAEQKPGEIAEELASSYERKLIEVAEMHGELIEFNERLHRALVAKEALVSQMRQELIDLRGPVPGDLSQTSEDQSLSDFEISNRALINVWIPSVFLRGKAANAFHVYQVYIRIKDDEWNIYRRYTEFRSLHHKLQNKYPQVRAYNFPPKKAIGNKDAKFVEERRKQLQNYLRSVMNKVIQMVPEFAASPKKETLIQLMPFFVDITPPGEPVNSRPKAASRFPKLSRGQPRETRNVEPQSGDL.

The RUN domain occupies 36–180 (SDSDSRVTCL…ILFAINIDNK (145 aa)). Residues serine 268, serine 291, serine 292, serine 330, and serine 344 each carry the phosphoserine modification. The disordered stretch occupies residues 269–299 (FDDEEDEQNSGDVFKKTPGAGESSEDNSDRS). Residues 346–357 (DDEDVDENEDDV) show a composition bias toward acidic residues. The interval 346–378 (DDEDVDENEDDVYGNSSGRKHRGHSESPEKPLE) is disordered. Serine 445 and serine 450 each carry phosphoserine. The stretch at 466-545 (TISELRQATV…VLKVQLKKYV (80 aa)) forms a coiled coil. Serine 639 bears the Phosphoserine mark. Threonine 641 is subject to Phosphothreonine. Serine 642 and serine 646 each carry phosphoserine. The region spanning 656–779 (ALINVWIPSV…PFFVDITPPG (124 aa)) is the PX domain. Residues 778 to 813 (PGEPVNSRPKAASRFPKLSRGQPRETRNVEPQSGDL) form a disordered region.

This sequence belongs to the sorting nexin family.

This chain is Sorting nexin-29 (SNX29), found in Homo sapiens (Human).